Reading from the N-terminus, the 1017-residue chain is DNA replication licensing factor MCM6 (1017 aa).

2 disordered regions span residues 1–94 (MSSP…SFKS) and 200–257 (SDSL…TSPE). The segment covering 24–34 (SIGAGFGSSSG) has biased composition (low complexity). Polar residues predominate over residues 35-83 (LDSQIGSRLHFPSSSQPHVSNSQTGPFVNDSTQFSSQRLQTDGSATNDM). Ser78 is modified (phosphoserine). Over residues 209–223 (DEGQADEDEQQDDDM) the composition is skewed to acidic residues. Over residues 224–257 (NGSSLPRDSGSSAAPGNGTSAMATRSITTSTSPE) the composition is skewed to polar residues. 2 positions are modified to phosphoserine: Ser249 and Ser372. The MCM domain maps to 525 to 732 (IYDKLVRSIA…IDTELASHIV (208 aa)). 575 to 582 (GDPSTSKS) contacts ATP. The Arginine finger signature appears at 707-710 (SRFD). Thr766 carries the phosphothreonine modification. The tract at residues 852 to 901 (IESQSHAASGNNDDNDDGTGSGVITSEPPADIEEGQSEATARPGTSEKKK) is disordered.

It belongs to the MCM family. As to quaternary structure, component of the MCM2-7 complex. The complex forms a toroidal hexameric ring with the proposed subunit order MCM2-MCM6-MCM4-MCM7-MCM3-MCM5; loaded onto DNA, forms a head-head double hexamer. Interacts with MCM10.

It is found in the nucleus. The catalysed reaction is ATP + H2O = ADP + phosphate + H(+). In terms of biological role, acts as a component of the MCM2-7 complex (MCM complex) which is the putative replicative helicase essential for 'once per cell cycle' DNA replication initiation and elongation in eukaryotic cells. The active ATPase sites in the MCM2-7 ring are formed through the interaction surfaces of two neighboring subunits such that a critical structure of a conserved arginine finger motif is provided in trans relative to the ATP-binding site of the Walker A box of the adjacent subunit. The six ATPase active sites, however, are likely to contribute differentially to the complex helicase activity. Once loaded onto DNA, double hexamers can slide on dsDNA in the absence of ATPase activity. Required for the entry in S phase and for cell division. The chain is DNA replication licensing factor MCM6 (MCM6) from Saccharomyces cerevisiae (strain ATCC 204508 / S288c) (Baker's yeast).